We begin with the raw amino-acid sequence, 1413 residues long: MKALLDLFKQVQQEEQFDAIKIGLASPEKIRSWSYGEVKKPETINYRTFKPERDGLFCAKIFGPIKDYECLCGKYKRLKHRGVICEKCGVEVTLAKVRRERMGHIELAAPTAHIWFLKSLPSRLGMVLDMTLRDIERVLYFEAFVVLEPGMTPLKKSQIMSEDDYIAKCDEYGEGEFVAMMGAEGIRELLRGIDIEKQIEQIRAELQATGSEAKIKKFAKRLKVLEAFQRSGIKPEWMILEVLPVLPPELRPLVPLDGGRFATSDLNDLYRRVINRNNRLKRLLELKAPEIIVRNEKRMLQEAVDSLLDNGRRGKAMTGANKRPLKSLAEMIKGKGGRFRQNLLGKRVDYSGRSVIVVGPTLKLHQCGLPKLMALELFKPFIFHKLETMGIATTIKAAKKEVESQTPVVWDILEEVIREHPVMLNRAPTLHRLGIQAFEPVLIEGKAIQLHPLVCAAFNADFDGDQMAVHVPLSLEAQMEARTLMLASNNVLFPANGDPSIVPSQDVVLGLYYTTRDKINGKGEGMTFADISEVIRAYENKEVELASRVNVRITEYEVVNKDADGDARFAPKITLQATTVGRSILSEILPKGLPFSVLNKPLKKKEISRLINTAFRKCGLRETVIFADKLLQSGFRLATRAGISIAIDDMLVPPQKEKIISDAAAKVKEYDKQYMSGLVTDQERYNNVVDIWGAAGDQVGKAMMEQLQHEDVVDRTGATVKQESFNSIYMMADSGARGSAAQIRQLAGMRGLMAKPDGSIIETPITANFREGLNVLQYFISTHGARKGLADTALKTANSGYLTRRLVDVTQDLVVVEDDCGTSNGVAMKALVEGGEVIEALRDRILGRVTVADVVNPETQETAIETGTLLDEDLVELIDAIGVDEVKVRTPLSCDTRYGLCGKCYGRDLGRGVLVNSGEAVGVIAAQSIGEPGTQLTMRTFHIGGAASRAAVASSVEAKATGTVRFTATMRYVTNTKGELIVISRSGEALITDDHGRERERHKIPYGATLLVQDGQAIKAGTQLATWDALTRPIVSEYTGTTKFENVEEGVTVAKQMDEVTGLSTLVVIDAKRRTAATKGLRPQVKLLDANNQEVKIPGTDHSVTIGFQVGALITVKDGQQVHVGEVLARIPTESQKTRDITGGLPRVAELFEARSPKDAAVLAEVTGTVSFGKDTKGKQRLVITDLDGNAHEFLIAKEKQVLVHDGQVVNKGEMIVEGPADPHDILRLKGIEELAHYIVDEVQDVYRLQGVKINDKHIEVIVRQMLRRVQIADVGDTKFIPGEQVERSELLDENDRVIADGKRPATHENLLLGITKASLSTDSFISAASFQETTRVLTEAAIMGKTDDLRGLKENVIVGRLIPAGTGLAYHRARKAREAAERERAQAISDEEQSLFIEPPVVQATEGEGDAV.

Zn(2+) contacts are provided by cysteine 70, cysteine 72, cysteine 85, and cysteine 88. 3 residues coordinate Mg(2+): aspartate 461, aspartate 463, and aspartate 465. Zn(2+) is bound by residues cysteine 820, cysteine 894, cysteine 901, and cysteine 904.

The protein belongs to the RNA polymerase beta' chain family. As to quaternary structure, the RNAP catalytic core consists of 2 alpha, 1 beta, 1 beta' and 1 omega subunit. When a sigma factor is associated with the core the holoenzyme is formed, which can initiate transcription. Requires Mg(2+) as cofactor. The cofactor is Zn(2+).

The catalysed reaction is RNA(n) + a ribonucleoside 5'-triphosphate = RNA(n+1) + diphosphate. In terms of biological role, DNA-dependent RNA polymerase catalyzes the transcription of DNA into RNA using the four ribonucleoside triphosphates as substrates. This Cupriavidus metallidurans (strain ATCC 43123 / DSM 2839 / NBRC 102507 / CH34) (Ralstonia metallidurans) protein is DNA-directed RNA polymerase subunit beta'.